A 132-amino-acid polypeptide reads, in one-letter code: Small ribosomal subunit protein uS8c (132 aa).

Belongs to the universal ribosomal protein uS8 family. As to quaternary structure, part of the 30S ribosomal subunit.

The protein resides in the plastid. It localises to the chloroplast. Functionally, one of the primary rRNA binding proteins, it binds directly to 16S rRNA central domain where it helps coordinate assembly of the platform of the 30S subunit. This chain is Small ribosomal subunit protein uS8c (rps8), found in Ceratophyllum demersum (Rigid hornwort).